The sequence spans 479 residues: Bifunctional aspartate aminotransferase and glutamate/aspartate-prephenate aminotransferase (479 aa).

A chloroplast-targeting transit peptide spans 1–79 (MAATTTTSSS…VEVDISLSPR (79 aa)). Gly-111 provides a ligand contact to L-aspartate. 172–173 (AK) contributes to the pyridoxal 5'-phosphate binding site. L-aspartate contacts are provided by Trp-197 and Asn-247. Pyridoxal 5'-phosphate-binding positions include Asn-247, Tyr-279, and 307–309 (GFS). Lys-310 bears the N6-(pyridoxal phosphate)lysine mark. Pyridoxal 5'-phosphate is bound at residue Arg-318. Residue Arg-449 participates in L-aspartate binding.

It belongs to the class-I pyridoxal-phosphate-dependent aminotransferase family. As to quaternary structure, homodimer. The cofactor is pyridoxal 5'-phosphate. Expressed in flowers, pistils, stamens, ovaries and at lower levels in leaves and sepals.

The protein resides in the plastid. It is found in the chloroplast. It carries out the reaction L-aspartate + 2-oxoglutarate = oxaloacetate + L-glutamate. It catalyses the reaction L-arogenate + oxaloacetate = prephenate + L-aspartate. The catalysed reaction is L-arogenate + 2-oxoglutarate = prephenate + L-glutamate. It participates in amino-acid biosynthesis; L-phenylalanine biosynthesis; L-arogenate from prephenate (L-Asp route): step 1/1. The protein operates within amino-acid biosynthesis; L-phenylalanine biosynthesis; L-arogenate from prephenate (L-Glu route): step 1/1. Functionally, prokaryotic-type aspartate aminotransferase. Also has a prenate transaminase activity. Involved in the aromatic amino acids biosynthesis pathway via the arogenate route. Required for the transamination of prephenate into arogenate. Can use 2-oxoglutarate, oxaloacetate and prephenate as substrates, but not phenylpyruvate or 4-hydroxyphenylpyruvate. The chain is Bifunctional aspartate aminotransferase and glutamate/aspartate-prephenate aminotransferase from Petunia hybrida (Petunia).